The following is a 69-amino-acid chain: Guanine nucleotide-binding protein G(I)/G(S)/G(O) subunit gamma-T2 (69 aa).

The tract at residues 47–69 (DPLLKGIPEDKNPFKEKGGCMIS) is disordered. A compositionally biased stretch (basic and acidic residues) spans 53–69 (IPEDKNPFKEKGGCMIS). Position 66 is a cysteine methyl ester (C66). C66 carries the S-farnesyl cysteine lipid modification. A propeptide spans 67–69 (MIS) (removed in mature form).

This sequence belongs to the G protein gamma family. In terms of assembly, g proteins are composed of 3 units, alpha, beta and gamma.

It localises to the cell membrane. Guanine nucleotide-binding proteins (G proteins) are involved as a modulator or transducer in various transmembrane signaling systems. The beta and gamma chains are required for the GTPase activity, for replacement of GDP by GTP, and for G protein-effector interaction. This is Guanine nucleotide-binding protein G(I)/G(S)/G(O) subunit gamma-T2 (GNGT2) from Canis lupus familiaris (Dog).